Here is a 298-residue protein sequence, read N- to C-terminus: Glutamyl-Q tRNA(Asp) synthetase (298 aa).

L-glutamate-binding positions include 8 to 12 (RFAPS) and glutamate 44. Positions 11-21 (PSPTGPLHFGS) match the 'HIGH' region motif. The Zn(2+) site is built by cysteine 100, cysteine 102, tyrosine 123, and cysteine 127. 2 residues coordinate L-glutamate: tyrosine 183 and arginine 201. The 'KMSKS' region motif lies at 239–243 (KLSKQ). Residue lysine 242 participates in ATP binding.

The protein belongs to the class-I aminoacyl-tRNA synthetase family. GluQ subfamily. The cofactor is Zn(2+).

Catalyzes the tRNA-independent activation of glutamate in presence of ATP and the subsequent transfer of glutamate onto a tRNA(Asp). Glutamate is transferred on the 2-amino-5-(4,5-dihydroxy-2-cyclopenten-1-yl) moiety of the queuosine in the wobble position of the QUC anticodon. The protein is Glutamyl-Q tRNA(Asp) synthetase of Burkholderia cenocepacia (strain ATCC BAA-245 / DSM 16553 / LMG 16656 / NCTC 13227 / J2315 / CF5610) (Burkholderia cepacia (strain J2315)).